Consider the following 103-residue polypeptide: Large ribosomal subunit protein bL21 (103 aa).

Belongs to the bacterial ribosomal protein bL21 family. As to quaternary structure, part of the 50S ribosomal subunit. Contacts protein L20.

This protein binds to 23S rRNA in the presence of protein L20. This is Large ribosomal subunit protein bL21 from Cupriavidus pinatubonensis (strain JMP 134 / LMG 1197) (Cupriavidus necator (strain JMP 134)).